Consider the following 187-residue polypeptide: UPF0398 protein LJ_1195 (187 aa).

It belongs to the UPF0398 family.

This chain is UPF0398 protein LJ_1195, found in Lactobacillus johnsonii (strain CNCM I-12250 / La1 / NCC 533).